Consider the following 119-residue polypeptide: Large ribosomal subunit protein bL20 (119 aa).

Belongs to the bacterial ribosomal protein bL20 family.

Its function is as follows. Binds directly to 23S ribosomal RNA and is necessary for the in vitro assembly process of the 50S ribosomal subunit. It is not involved in the protein synthesizing functions of that subunit. This is Large ribosomal subunit protein bL20 from Bradyrhizobium diazoefficiens (strain JCM 10833 / BCRC 13528 / IAM 13628 / NBRC 14792 / USDA 110).